We begin with the raw amino-acid sequence, 348 residues long: MSSDIEAPTSLTSMRGALPPAVADDVRALHLTTVRHDGVPPLSEQPLLWLSDQEAPVVHVLAWHAVTGGAQELVGYAQVDVGSSTTARAELVVAPGHRRRGTGRSLLAHAAQEAASIPGRRLHVWAHGDLPAARATAAATGLVVVRELWRMAVDVTQHPPGAPQLPPGVAVRAFVPGQDEDAWRRVNARAFAHHPEQGRMTSADLRARESEPWFDPAGFLLAERDGQLLGSVWTKVHPGSEAPDGAPGEEVGEIYVVGVDPDAQGLGMGRALTALGLAHLRDRGLRTVILYTGAENTVAVHTYRRAGFARTAVDVMYGPPPAGSPAHGTPLVRVTDTPSSPGDATMGS.

N-acetyltransferase domains are found at residues 12 to 156 (TSMR…VDVT) and 169 to 330 (VAVR…HGTP). Glu44 contributes to the 1D-myo-inositol 2-(L-cysteinylamino)-2-deoxy-alpha-D-glucopyranoside binding site. 91-93 (LVV) contributes to the acetyl-CoA binding site. Positions 196, 235, and 253 each coordinate 1D-myo-inositol 2-(L-cysteinylamino)-2-deoxy-alpha-D-glucopyranoside. Residues 257–259 (VGV) and 264–270 (QGLGMGR) contribute to the acetyl-CoA site. Tyr291 provides a ligand contact to 1D-myo-inositol 2-(L-cysteinylamino)-2-deoxy-alpha-D-glucopyranoside. 296 to 301 (NTVAVH) contacts acetyl-CoA. The interval 320-348 (PPAGSPAHGTPLVRVTDTPSSPGDATMGS) is disordered. Residues 336–348 (DTPSSPGDATMGS) are compositionally biased toward polar residues.

It belongs to the acetyltransferase family. MshD subfamily. Monomer.

The enzyme catalyses 1D-myo-inositol 2-(L-cysteinylamino)-2-deoxy-alpha-D-glucopyranoside + acetyl-CoA = mycothiol + CoA + H(+). Catalyzes the transfer of acetyl from acetyl-CoA to desacetylmycothiol (Cys-GlcN-Ins) to form mycothiol. The sequence is that of Mycothiol acetyltransferase from Cellulomonas flavigena (strain ATCC 482 / DSM 20109 / BCRC 11376 / JCM 18109 / NBRC 3775 / NCIMB 8073 / NRS 134).